A 187-amino-acid polypeptide reads, in one-letter code: uncharacterized protein (187 aa).

Belongs to the isochorismatase family.

This is an uncharacterized protein from Bacillus subtilis (strain 168).